A 118-amino-acid chain; its full sequence is Small ribosomal subunit protein uS13 (118 aa).

Belongs to the universal ribosomal protein uS13 family. As to quaternary structure, part of the 30S ribosomal subunit. Forms a loose heterodimer with protein S19. Forms two bridges to the 50S subunit in the 70S ribosome.

Functionally, located at the top of the head of the 30S subunit, it contacts several helices of the 16S rRNA. In the 70S ribosome it contacts the 23S rRNA (bridge B1a) and protein L5 of the 50S subunit (bridge B1b), connecting the 2 subunits; these bridges are implicated in subunit movement. Contacts the tRNAs in the A and P-sites. The polypeptide is Small ribosomal subunit protein uS13 (Carsonella ruddii (strain PV)).